Here is a 216-residue protein sequence, read N- to C-terminus: Guanylate kinase (216 aa).

Positions 11-189 (GVLIVISGPS…AVKKIEAILL (179 aa)) constitute a Guanylate kinase-like domain. Residue 18-25 (GPSGAGKG) coordinates ATP.

It belongs to the guanylate kinase family.

It localises to the cytoplasm. It carries out the reaction GMP + ATP = GDP + ADP. Functionally, essential for recycling GMP and indirectly, cGMP. In Clostridium perfringens (strain SM101 / Type A), this protein is Guanylate kinase.